The following is a 317-amino-acid chain: MDKLEDHDDNNLQSQIEEIEALSSIYGEEWCVIDEAARVFCIRISETQQPKWTVCLQIILPPDYPSSAPPIYQINAAWLRGQDRMTLSNSLEEIYVENAGESILYLWVEKIREFLTEKSQHSDGPDTCKTVMTEEGGHDCDEDDLPDISVLKLSSQSEQIFSPASDDEELPLIKHGESITDRRSTFQPHLSAVENPKQVQRVLNKLYENKKIASATHNIYAYRIYCQEKNSVLQDCEDDGETAAGGRLLHLLQILDVRNVLVVVSRWYGGILLGPDRFKHINNCARTILIQEGYADSTEETSKAGGKSKKPKSKKTK.

Positions 17 to 118 (EEIEALSSIY…EKIREFLTEK (102 aa)) constitute an RWD domain. The interval 296 to 317 (DSTEETSKAGGKSKKPKSKKTK) is disordered. Residues 306–317 (GKSKKPKSKKTK) are compositionally biased toward basic residues.

Belongs to the IMPACT family. In terms of assembly, interacts with GCN1; prevents the interaction of GCN1 with EIF2AK4/GCN2 and inhibits EIF2AK4/GCN2 kinase activity. Interaction with RPL39; this interaction occurs in a GCN1-independent manner. Associates with ribosomes; this interaction occurs in a GCN1-independent manner. Associates with actin; this interaction occurs in a GCN1-independent manner.

The protein resides in the cytoplasm. Its function is as follows. Translational regulator that ensures constant high levels of translation upon a variety of stress conditions, such as amino acid starvation, UV-C irradiation, proteasome inhibitor treatment and glucose deprivation. Plays a role as a negative regulator of the EIF2AK4/GCN2 kinase activity; impairs GCN1-mediated EIF2AK4/GCN2 activation, and hence EIF2AK4/GCN2-mediated eIF-2-alpha phosphorylation and subsequent down-regulation of protein synthesis. Plays a role in differentiation of neuronal cells by stimulating neurite outgrowth. This Xenopus tropicalis (Western clawed frog) protein is Protein IMPACT-B (impact-B).